We begin with the raw amino-acid sequence, 472 residues long: F-box protein At3g03040 (472 aa).

Residues 1-49 (MDLLSSLPDEVRCLILSFLTTKESASTSVLSKKWRNLFALVPNLDFDDS) form the F-box domain.

This is F-box protein At3g03040 from Arabidopsis thaliana (Mouse-ear cress).